Here is a 138-residue protein sequence, read N- to C-terminus: Small ribosomal subunit protein uS11c (138 aa).

The protein belongs to the universal ribosomal protein uS11 family. In terms of assembly, part of the 30S ribosomal subunit.

Its subcellular location is the plastid. It localises to the chloroplast. This Nandina domestica (Heavenly bamboo) protein is Small ribosomal subunit protein uS11c.